Reading from the N-terminus, the 565-residue chain is Mediator of RNA polymerase II transcription subunit 1 (565 aa).

A disordered region spans residues 141 to 170 (SGNNLGSGNGTNGSSLTNKTDKKSVSSGNG).

The protein belongs to the Mediator complex subunit 1 family. As to quaternary structure, component of the Mediator complex.

It is found in the nucleus. In terms of biological role, component of the Mediator complex, a coactivator involved in the regulated transcription of nearly all RNA polymerase II-dependent genes. Mediator functions as a bridge to convey information from gene-specific regulatory proteins to the basal RNA polymerase II transcription machinery. Mediator is recruited to promoters by direct interactions with regulatory proteins and serves as a scaffold for the assembly of a functional preinitiation complex with RNA polymerase II and the general transcription factors. The chain is Mediator of RNA polymerase II transcription subunit 1 (MED1) from Candida glabrata (strain ATCC 2001 / BCRC 20586 / JCM 3761 / NBRC 0622 / NRRL Y-65 / CBS 138) (Yeast).